Reading from the N-terminus, the 186-residue chain is Acetyltransferase PA2578 (186 aa).

The region spanning 12 to 176 (LQLVPFQLGH…NVVLMGLLRQ (165 aa)) is the N-acetyltransferase domain. CoA contacts are provided by residues Q37, 97 to 99 (IVL), G105, N137, and 142 to 144 (HLY).

Homodimer.

Its function is as follows. Catalyzes the transfer of an acetyl group from acetyl coenzyme A (AcCoA) to an acceptor substrate and releases both CoA and the acetylated product. It prefers the antibiotic chloramphenicol. The sequence is that of Acetyltransferase PA2578 from Pseudomonas aeruginosa (strain ATCC 15692 / DSM 22644 / CIP 104116 / JCM 14847 / LMG 12228 / 1C / PRS 101 / PAO1).